Reading from the N-terminus, the 595-residue chain is Probable xyloglucan glycosyltransferase 9 (595 aa).

Helical transmembrane passes span 30 to 50 (AFVV…INGW) and 77 to 97 (ATYV…LFLI). The active site involves aspartate 177. Substrate is bound by residues aspartate 236 and aspartate 238. The active site involves aspartate 330. The next 4 helical transmembrane spans lie at 408-428 (LILP…TMFV), 433-453 (LPDW…ILPS), 545-564 (IYKK…ARSL), and 570-590 (IHFY…LDLI).

Belongs to the glycosyltransferase 2 family. Plant cellulose synthase-like C subfamily.

The protein localises to the golgi apparatus membrane. Its function is as follows. Probable beta-1,4-glucan synthase rather involved in the synthesis of the xyloglucan backbone than cellulose. Seems to work simultaneously with xyloglucan 6-xylosyltransferase. Xyloglucan is a noncellulosic polysaccharides of plant cell wall and consists of a glucan backbone substituted by xylose, galactose and fucose. This Oryza sativa subsp. japonica (Rice) protein is Probable xyloglucan glycosyltransferase 9 (CSLC9).